The following is a 205-amino-acid chain: GTP-binding protein yptV5 (205 aa).

GTP is bound at residue Gly15 to Thr22. The Effector region signature appears at Tyr37 to Phe45. GTP is bound by residues Asp63 to Gln67 and Asn125 to Asp128. S-geranylgeranyl cysteine attachment occurs at residues Cys204 and Cys205.

Belongs to the small GTPase superfamily. Rab family.

It is found in the cell membrane. In terms of biological role, protein transport. Probably involved in vesicular traffic. The chain is GTP-binding protein yptV5 (YPTV5) from Volvox carteri (Green alga).